Consider the following 167-residue polypeptide: 3-dehydroquinate dehydratase (167 aa).

Catalysis depends on Y22, which acts as the Proton acceptor. The substrate site is built by N76, H82, and D89. H102 acts as the Proton donor in catalysis. Substrate contacts are provided by residues 103–104 (LT) and R113.

Belongs to the type-II 3-dehydroquinase family. In terms of assembly, homododecamer.

It carries out the reaction 3-dehydroquinate = 3-dehydroshikimate + H2O. It functions in the pathway metabolic intermediate biosynthesis; chorismate biosynthesis; chorismate from D-erythrose 4-phosphate and phosphoenolpyruvate: step 3/7. Catalyzes a trans-dehydration via an enolate intermediate. In Helicobacter pylori (strain Shi470), this protein is 3-dehydroquinate dehydratase.